Reading from the N-terminus, the 502-residue chain is tRNA-2-methylthio-N(6)-dimethylallyladenosine synthase (502 aa).

Residues 12-129 (RTYQVRTYGC…LPVLLERARH (118 aa)) form the MTTase N-terminal domain. Residues Cys21, Cys58, Cys92, Cys166, Cys170, and Cys173 each coordinate [4Fe-4S] cluster. Positions 152-383 (RESTYAGWVS…ACVEEITWAE (232 aa)) constitute a Radical SAM core domain. The 71-residue stretch at 385-455 (RRLVGETVEV…PHHLNADGEP (71 aa)) folds into the TRAM domain. A disordered region spans residues 451 to 502 (ADGEPLAHRRTPAGDAAEAGRRPRTAGVSLGLPTVGAPPSPVPPAASSACAC).

Belongs to the methylthiotransferase family. MiaB subfamily. In terms of assembly, monomer. Requires [4Fe-4S] cluster as cofactor.

It is found in the cytoplasm. It catalyses the reaction N(6)-dimethylallyladenosine(37) in tRNA + (sulfur carrier)-SH + AH2 + 2 S-adenosyl-L-methionine = 2-methylsulfanyl-N(6)-dimethylallyladenosine(37) in tRNA + (sulfur carrier)-H + 5'-deoxyadenosine + L-methionine + A + S-adenosyl-L-homocysteine + 2 H(+). In terms of biological role, catalyzes the methylthiolation of N6-(dimethylallyl)adenosine (i(6)A), leading to the formation of 2-methylthio-N6-(dimethylallyl)adenosine (ms(2)i(6)A) at position 37 in tRNAs that read codons beginning with uridine. In Salinispora arenicola (strain CNS-205), this protein is tRNA-2-methylthio-N(6)-dimethylallyladenosine synthase.